Here is a 188-residue protein sequence, read N- to C-terminus: GMP synthase [glutamine-hydrolyzing] subunit A (188 aa).

The region spanning 1–188 (MIIIMDNGGQ…RNFAKICGEL (188 aa)) is the Glutamine amidotransferase type-1 domain. Catalysis depends on C78, which acts as the Nucleophile. Active-site residues include H165 and E167.

In terms of assembly, heterodimer composed of a glutamine amidotransferase subunit (A) and a GMP-binding subunit (B).

It catalyses the reaction XMP + L-glutamine + ATP + H2O = GMP + L-glutamate + AMP + diphosphate + 2 H(+). Its pathway is purine metabolism; GMP biosynthesis; GMP from XMP (L-Gln route): step 1/1. In terms of biological role, catalyzes the synthesis of GMP from XMP. The protein is GMP synthase [glutamine-hydrolyzing] subunit A of Pyrococcus furiosus (strain ATCC 43587 / DSM 3638 / JCM 8422 / Vc1).